The primary structure comprises 453 residues: Choline kinase alpha (453 aa).

The disordered stretch occupies residues 22-81 (CGGNAAPTPGVGQQRDAAGELESKQLGGRTQPLALPPPPPPPLPLPPPPSPPLADEQPEP). Pro residues predominate over residues 55 to 73 (ALPPPPPPPLPLPPPPSPP). A Phosphoserine modification is found at serine 71. Residues 113–119 (RGGLSNM), arginine 142, and 203–209 (QFIPSRR) each bind ATP. 115–117 (GLS) contacts phosphocholine. Lysine 243 carries the post-translational modification N6-acetyllysine. A Phosphoserine modification is found at serine 275. ATP is bound by residues glutamine 304 and aspartate 326.

Belongs to the choline/ethanolamine kinase family. Homodimer. Heterodimer with CHKB. As to quaternary structure, monomer; acetylation by KAT5 promotes dissociation of the homodimer and monomerization. Post-translationally, phosphorylated at Ser-275 by AMPK in response to glucose deprivation, leading to localization to lipid droplets. Acetylated by KAT5 at Lys-243 following phosphorylation by AMPK, leading to monomerization and conversion into a tyrosine-protein kinase. In terms of tissue distribution, expressed ubiquitously with the highest level in testis.

The protein resides in the cytoplasm. The protein localises to the cytosol. It is found in the lipid droplet. It catalyses the reaction choline + ATP = phosphocholine + ADP + H(+). It carries out the reaction ethanolamine + ATP = phosphoethanolamine + ADP + H(+). The enzyme catalyses L-tyrosyl-[protein] + ATP = O-phospho-L-tyrosyl-[protein] + ADP + H(+). The protein operates within phospholipid metabolism; phosphatidylcholine biosynthesis; phosphocholine from choline: step 1/1. It functions in the pathway phospholipid metabolism; phosphatidylethanolamine biosynthesis; phosphatidylethanolamine from ethanolamine: step 1/3. Plays a key role in phospholipid biosynthesis by catalyzing the phosphorylation of free choline to phosphocholine, the first step in phosphatidylcholine biosynthesis. Also phosphorylates ethanolamine, thereby contributing to phosphatidylethanolamine biosynthesis. Has higher activity with choline. Functionally, this isoform plays a key role in lipolysis of lipid droplets following glucose deprivation. In response to glucose deprivation, phosphorylated by AMPK, promoting localization to lipid droplets. Phosphorylation is followed by acetylation by KAT5, leading to dissociation of the homodimer into a monomer. Monomeric CHKA isoform 1 is converted into a tyrosine-protein kinase, which phosphorylates lipid droplet structural proteins PLIN2 and PLIN3, leading to lipolysis of lipid droplets. In Mus musculus (Mouse), this protein is Choline kinase alpha (Chka).